A 37-amino-acid chain; its full sequence is Potassium channel toxin alpha-KTx 15.1 (37 aa).

Pyrrolidone carboxylic acid is present on Q1. Cystine bridges form between C8–C28, C13–C33, and C17–C35.

Belongs to the short scorpion toxin superfamily. Potassium channel inhibitor family. Alpha-KTx 15 subfamily. As to expression, expressed by the venom gland.

It localises to the secreted. Blocker of voltage-gated potassium channels (600 nM of the toxin induces a block of 25% of hERG currents). May also inhibit Kv4/KCND when coexpressed with DPP6 or DPP10. In adult rat brain, it blocks the transient potassium channels in cerebellum granular cells. Blocks potassium channels by a simple 'plugging mechanism', in which a single toxin molecule finds a specific receptor site in the external vestibule of the potassium channel and thereby occludes the outer entry to the potassium conducting pore. This is Potassium channel toxin alpha-KTx 15.1 from Androctonus australis (Sahara scorpion).